The sequence spans 503 residues: Aromatase (503 aa).

Cys437 contributes to the heme binding site.

The protein belongs to the cytochrome P450 family. The cofactor is heme.

It localises to the membrane. It carries out the reaction testosterone + 3 reduced [NADPH--hemoprotein reductase] + 3 O2 = 17beta-estradiol + formate + 3 oxidized [NADPH--hemoprotein reductase] + 4 H2O + 4 H(+). The enzyme catalyses androst-4-ene-3,17-dione + 3 reduced [NADPH--hemoprotein reductase] + 3 O2 = estrone + formate + 3 oxidized [NADPH--hemoprotein reductase] + 4 H2O + 4 H(+). Its function is as follows. Catalyzes the formation of aromatic C18 estrogens from C19 androgens. The sequence is that of Aromatase (CYP19A1) from Oryctolagus cuniculus (Rabbit).